A 164-amino-acid chain; its full sequence is GTP-dependent dephospho-CoA kinase (164 aa).

The GTP site is built by Asp40, Val41, Val42, Asp59, Lys61, and Glu113.

It belongs to the GTP-dependent DPCK family.

It carries out the reaction 3'-dephospho-CoA + GTP = GDP + CoA + H(+). It participates in cofactor biosynthesis; coenzyme A biosynthesis. Functionally, catalyzes the GTP-dependent phosphorylation of the 3'-hydroxyl group of dephosphocoenzyme A to form coenzyme A (CoA). This chain is GTP-dependent dephospho-CoA kinase, found in Sulfolobus acidocaldarius (strain ATCC 33909 / DSM 639 / JCM 8929 / NBRC 15157 / NCIMB 11770).